Reading from the N-terminus, the 416-residue chain is Adipocyte plasma membrane-associated protein (416 aa).

Over 1–39 (MNEPEGLRFRRLNRPQIITDELQEPQYKGTSTYSGKVFR) the chain is Cytoplasmic. A helical membrane pass occupies residues 40 to 60 (VILVTLGGCLILPLLVVFFLL). At 61–412 (ESPIHPELLS…FRSPYLCKLD (352 aa)) the chain is on the extracellular side. An N-linked (GlcNAc...) asparagine glycan is attached at asparagine 160.

Belongs to the strictosidine synthase family.

The protein localises to the membrane. The chain is Adipocyte plasma membrane-associated protein (apmap) from Salmo salar (Atlantic salmon).